The following is a 422-amino-acid chain: AP-1 complex subunit mu-1-I (422 aa).

The MHD domain occupies 167-420; the sequence is KNEVFLDVIE…ITQNGEYEMR (254 aa).

This sequence belongs to the adaptor complexes medium subunit family. In terms of assembly, adaptor protein complex 1 (AP-1) is a heterotetramer composed of two large adaptins (gamma- and beta'-type subunits), a medium adaptin (mu-type subunit AP47) and a small adaptin (sigma-type subunit AP19). Interacts (via N-terminus) with kvs-4. As to expression, expressed in the cholinergic motor neuron DA9.

The protein resides in the golgi apparatus. It is found in the cytoplasmic vesicle. Its subcellular location is the clathrin-coated vesicle membrane. The protein localises to the cell projection. It localises to the dendrite. Component of the adaptor complexes which link clathrin to receptors in coated vesicles. Clathrin-associated protein complexes are believed to interact with the cytoplasmic tails of membrane proteins, leading to their selection and concentration. Required for many aspects of development and behavior, including negative regulation of vulval differentiation. Required for the dendritic localization of potassium channel kvs-4 in the cholinergic motor neuron DA9. The chain is AP-1 complex subunit mu-1-I (unc-101) from Caenorhabditis elegans.